The following is a 307-amino-acid chain: MTEQALLSELDRLVSEERNPRTMDIDLLSSLAIVRRINDEDHLVPAAVEQVLPQVAQAVDKVVDAFRVGGRLIYLGAGTSGRLGVLDASECPPTFSVPEGMVIGLIAGGVDALQHAIEGAEDDPSLGESDLRNIGLTSHDVVVGIAVSGRTPYVIGGLAYAESIGATTVALSCNPDSTIATMAEIAISPVVGPEILTGSTRLKSGTAQKLVLNMLTTASMIRIGKTYENLMVDVSATNNKLVARASRIVMQATGCGAGEAKRVLALTDNEVKLAILITITGMPVDEARKALKNAGGFLRQAINANKA.

In terms of domain architecture, SIS spans 62-225; that stretch reads VVDAFRVGGR…TTASMIRIGK (164 aa). Glu-90 acts as the Proton donor in catalysis. Glu-121 is a catalytic residue.

This sequence belongs to the GCKR-like family. MurNAc-6-P etherase subfamily. As to quaternary structure, homodimer.

It catalyses the reaction N-acetyl-D-muramate 6-phosphate + H2O = N-acetyl-D-glucosamine 6-phosphate + (R)-lactate. It functions in the pathway amino-sugar metabolism; 1,6-anhydro-N-acetylmuramate degradation. Its pathway is amino-sugar metabolism; N-acetylmuramate degradation. The protein operates within cell wall biogenesis; peptidoglycan recycling. In terms of biological role, specifically catalyzes the cleavage of the D-lactyl ether substituent of MurNAc 6-phosphate, producing GlcNAc 6-phosphate and D-lactate. Together with AnmK, is also required for the utilization of anhydro-N-acetylmuramic acid (anhMurNAc) either imported from the medium or derived from its own cell wall murein, and thus plays a role in cell wall recycling. The polypeptide is N-acetylmuramic acid 6-phosphate etherase (Brucella anthropi (strain ATCC 49188 / DSM 6882 / CCUG 24695 / JCM 21032 / LMG 3331 / NBRC 15819 / NCTC 12168 / Alc 37) (Ochrobactrum anthropi)).